Here is a 139-residue protein sequence, read N- to C-terminus: Putative pre-16S rRNA nuclease (139 aa).

The protein belongs to the YqgF nuclease family.

The protein localises to the cytoplasm. Could be a nuclease involved in processing of the 5'-end of pre-16S rRNA. This is Putative pre-16S rRNA nuclease from Thermoanaerobacter pseudethanolicus (strain ATCC 33223 / 39E) (Clostridium thermohydrosulfuricum).